A 463-amino-acid polypeptide reads, in one-letter code: MFS-type transporter criB (463 aa).

11 helical membrane-spanning segments follow: residues 5-27, 46-66, 83-103, 106-126, 141-161, 168-188, 256-276, 293-313, 323-343, 355-375, and 402-422; these read LVLSCGVIAGISGFLFGYDSGIM, MVGTIVAIMQAGGFFGCLTAG, VFVVVGGALQAAAYHTAMLLI, LVTGFGVGSLTMTVPVYQAEI, LMLAIGSAIANWTGYGCSFVN, MPLALQAVPGIVLFFGSYFLP, LFLGAGIWLMLNLTGINVINY, IFLSGVYGSVGAATTFLALFF, LMMANISQTATLIVMAGLTAA, VAMIFLFFVIYCSTWGPLSWV, and FYFLFVATNFISALVLLFLYP.

The protein belongs to the major facilitator superfamily. Sugar transporter (TC 2.A.1.1) family.

It is found in the membrane. Functionally, MFS-type transporter; part of the gene cluster that mediates the biosynthesis of echinulin family alkaloid. The protein is MFS-type transporter criB of Aspergillus cristatus (Chinese Fuzhuan brick tea-fermentation fungus).